Here is a 227-residue protein sequence, read N- to C-terminus: MDSKWSRRTGSLLLLLVSNLLLCKSTASLPICPSGAVNCQVSLRDLFDRAVILSHHIHKLSSEMFNEFDKRYTQGRGFITKAINSCHTSSLSTPEDKEQAQQIHHEDLLNMVLRVLPSWNDPLYHLVTEVRGMQEAPDAILSKAIEIEEQNRRLLEGMEKIVGQVHPGIKENEIYSVWSGLPSLQMADEDARLFAFYNLLHCLRRDSHKIDNYLKLLKCRIIYDSNC.

Positions 1 to 28 are cleaved as a signal peptide; the sequence is MDSKWSRRTGSLLLLLVSNLLLCKSTAS. A disulfide bridge connects residues Cys-32 and Cys-39. Phosphoserine is present on residues Ser-54, Ser-62, and Ser-118. Cystine bridges form between Cys-86/Cys-202 and Cys-219/Cys-227.

This sequence belongs to the somatotropin/prolactin family. In terms of assembly, interacts with PRLR.

The protein resides in the secreted. Functionally, prolactin acts primarily on the mammary gland by promoting lactation. The protein is Prolactin (PRL) of Oryctolagus cuniculus (Rabbit).